The following is a 90-amino-acid chain: Probable two-component-system connector protein YmgA (90 aa).

The segment covering 63-80 (SDSGGPNRRTATADNKSM) has biased composition (polar residues). The segment at 63-90 (SDSGGPNRRTATADNKSMFNGKKINRIH) is disordered.

Functionally, probably a connector protein for RcsB/C regulation of biofilm formation, providing additional signal input into the two-component signaling pathway. May serve to stimulate biofilm maturation, probably via the Rcs phosphorelay. Mild overexpression at 16 degrees Celsius increases the production of colanic acid, an exopolysaccharide and matrix component, and reduces adhesive curli fimbriae expression. Both of these effects require RcsB. The sequence is that of Probable two-component-system connector protein YmgA (ymgA) from Escherichia coli (strain K12).